A 275-amino-acid chain; its full sequence is Large ribosomal subunit protein uL2 (275 aa).

A compositionally biased stretch (polar residues) spans 38-53 (NSKAGRNNNGRITTRH). Disordered stretches follow at residues 38-59 (NSKAGRNNNGRITTRHQGGGHK) and 224-257 (AMNPIDHPHGGGEGRTAAGRDPVSPWGTPTKGFR).

This sequence belongs to the universal ribosomal protein uL2 family. In terms of assembly, part of the 50S ribosomal subunit. Forms a bridge to the 30S subunit in the 70S ribosome.

Functionally, one of the primary rRNA binding proteins. Required for association of the 30S and 50S subunits to form the 70S ribosome, for tRNA binding and peptide bond formation. It has been suggested to have peptidyltransferase activity; this is somewhat controversial. Makes several contacts with the 16S rRNA in the 70S ribosome. The sequence is that of Large ribosomal subunit protein uL2 from Burkholderia thailandensis (strain ATCC 700388 / DSM 13276 / CCUG 48851 / CIP 106301 / E264).